The primary structure comprises 149 residues: Probable glycine-rich RNA-binding protein 1 (149 aa).

Residues 8–83 (YRCFVGGLAW…LDGRNITAQA (76 aa)) form the RRM domain. The disordered stretch occupies residues 80-149 (TAQARGSGTR…GRSEGGSWRN (70 aa)). Composition is skewed to gly residues over residues 87-101 (GTRG…SGGY), 110-123 (YNRG…GGYG), and 131-143 (YGDG…GRSE).

It belongs to the GR-RBP family.

Functionally, possibly has a role in RNA transcription or processing during stress. In Arabidopsis thaliana (Mouse-ear cress), this protein is Probable glycine-rich RNA-binding protein 1 (RBG1).